The chain runs to 552 residues: Cytochrome c oxidase subunit 1 (552 aa).

A helical membrane pass occupies residues 35-55 (VIGIQYLVTAFIFYLIGGLMA). His-82 contacts Fe(II)-heme a. The next 6 membrane-spanning stretches (helical) occupy residues 85-105 (IMIF…YLVP), 120-140 (ALAF…FLFG), 164-184 (WILA…NFIV), 211-231 (LLAL…LFDI), 252-272 (LFWF…FGIM), and 284-304 (IFGY…GLFV). His-258 and Tyr-262 together coordinate Cu cation. A cross-link (1'-histidyl-3'-tyrosine (His-Tyr)) is located at residues 258-262 (HPAVY). Residues His-307 and His-308 each coordinate Cu cation. 5 helical membrane passes run 321 to 341 (FFTI…FSWV), 355 to 375 (MLFA…GVTL), 390 to 410 (VVAH…YAGI), 426 to 446 (LGIL…LPMH), and 470 to 490 (ICTI…INII). His-393 contacts heme a3. Position 395 (His-395) interacts with Fe(II)-heme a.

Belongs to the heme-copper respiratory oxidase family. Cu(2+) serves as cofactor. Heme is required as a cofactor.

The protein localises to the cell membrane. It carries out the reaction 4 Fe(II)-[cytochrome c] + O2 + 8 H(+)(in) = 4 Fe(III)-[cytochrome c] + 2 H2O + 4 H(+)(out). It participates in energy metabolism; oxidative phosphorylation. Its function is as follows. Cytochrome c oxidase is the component of the respiratory chain that catalyzes the reduction of oxygen to water. Subunits 1-3 form the functional core of the enzyme complex. CO I is the catalytic subunit of the enzyme. Electrons originating in cytochrome c are transferred via the copper A center of subunit 2 and heme A of subunit 1 to the bimetallic center formed by heme A3 and copper B. The protein is Cytochrome c oxidase subunit 1 (ctaD) of Thermostichus vulcanus (Synechococcus vulcanus).